Consider the following 318-residue polypeptide: Polyprenal reductase (318 aa).

Residues 1-19 (MAPWAAAQLWALNPLRALW) are Cytoplasmic-facing. A helical membrane pass occupies residues 20–40 (LTLAAAFLLTLLLQLVPPGLL). Residues 41–80 (PGCALFQDLIRYGKTKREGQSRPAVCRVFDVPKRYFSHFY) lie on the Lumenal side of the membrane. The chain crosses the membrane as a helical span at residues 81 to 101 (IISALWNGFLLWHLTQSVFLG). Residues 102 to 119 (VPFPNWLHGLLRILGASQ) lie on the Cytoplasmic side of the membrane. The helical transmembrane segment at 120–140 (FQGGELALSAFLVLVFLWLHS) threads the bilayer. The Lumenal segment spans residues 141 to 156 (LRRLFECFYVSVFSNT). The chain crosses the membrane as a helical span at residues 157 to 177 (VIHIVQYCFGLVYYVLTGLTV). Residues 178-194 (LSQVPMDGRNAYVIGKN) lie on the Cytoplasmic side of the membrane. Residues 195–215 (LLMQARWFHILGMLMFIWSSV) form a helical membrane-spanning segment. Residues 216–265 (HQYKCHVILGNLRKNKAGVVIHCNHRIPFGDWFEYVSSPNYLAELMIYIS) lie on the Lumenal side of the membrane. The helical transmembrane segment at 266-286 (MAVTFGFHNLTWWLVVTYVFF) threads the bilayer. The Cytoplasmic segment spans residues 287–318 (SQALSAFLSHKFYKSKFVSYPKHRKAFLPFLF).

This sequence belongs to the steroid 5-alpha reductase family. Polyprenal reductase subfamily.

The protein resides in the endoplasmic reticulum membrane. The catalysed reaction is a di-trans,poly-cis-dolichal + NADP(+) = a di-trans,poly-cis-polyprenal + NADPH + H(+). It catalyses the reaction a 3-oxo-5alpha-steroid + NADP(+) = a 3-oxo-Delta(4)-steroid + NADPH + H(+). The enzyme catalyses androst-4-ene-3,17-dione + NADPH + H(+) = 5alpha-androstan-3,17-dione + NADP(+). It carries out the reaction 17beta-hydroxy-5alpha-androstan-3-one + NADP(+) = testosterone + NADPH + H(+). It participates in protein modification; protein glycosylation. In terms of biological role, plays a key role in early steps of protein N-linked glycosylation by being involved in the conversion of polyprenol into dolichol. Acts as a polyprenal reductase that mediates the reduction of polyprenal into dolichal in a NADP-dependent mechanism. Dolichols are required for the synthesis of dolichol-linked monosaccharides and the oligosaccharide precursor used for N-glycosylation. Also able to convert testosterone (T) into 5-alpha-dihydrotestosterone (DHT). This is Polyprenal reductase (SRD5A3) from Ailuropoda melanoleuca (Giant panda).